Consider the following 931-residue polypeptide: Transportin (931 aa).

19 HEAT repeats span residues 10–37 (GLKQLVYVLNLSNSTSREVHDQIREELD), 42–79 (VPDYNNYLTLIFKSNELQPHIRSVAGLVLKTNIKQYFE), 88–121 (YIKREILPVLSDPDASVRHTVGNIITNLIKKSCF), 127–164 (LLPALNLALDSNSQDLIEGSLYTLSLLCEDSTKKLDSD), 171–201 (NQLIPKLIMFFKCNNADFRKKALVSISYFII), 214–241 (FLKGIFSMSEDPSEAVRTNVCKTLVTLV), 253–280 (KDVIQYMLHATKDKSEEVALEACEFWTA), 296–421 (PVLV…LSGI), 430–459 (VTLPLIEQRMNEQNPWPVRESAILALGAIA), 471–498 (SKVIPYLINTLNDPKPLVRSITCWTLSR), 512–545 (LHPLVVNLLNRIVDNNKKVQEAACSAFATLEEEA), 553–586 (LQMILVTFVNAFGKYQAKNLLILYDAISTLAKVV), 594–632 (ELINILVPPLLQKFNALDDSNKNLLPLLGCLNQVCSSIG), 640–693 (SLFF…GIGT), 704–735 (LPHLLLQCMNLRGSDVLQSSFALLGDMSKFCL), 743–776 (PDYLNILTNNLYPEYLSVCNNASWAIGEIAIRMP), 784–819 (VAIRDRLISNINKVNLNRGVLENTAVTIGRLGIVSP), 827–860 (DKFIQCWCMAIRRKTDDIEKDSAFRGMWLIINNN), and 869–900 (VYICDAVASWDKMQPDLYEAYFKLLHMYKTSM). One can recognise an Importin N-terminal domain in the interval 32 to 99 (IREELDKFHS…KREILPVLSD (68 aa)). Positions 317-401 (DQGDDSMTPD…DDDDDDDGFE (85 aa)) are disordered. The span at 358-381 (DNNNNSNNNNSSNNNSSNNNNNNN) shows a compositional bias: low complexity. Residues 382–401 (NEDDEEYNDDDDDDDDDGFE) are compositionally biased toward acidic residues.

This sequence belongs to the importin beta family. Importin beta-2 subfamily. Forms a complex with an importin alpha subunit.

The protein resides in the cytoplasm. Its subcellular location is the nucleus envelope. Its function is as follows. Functions in nuclear protein import via a substrate-importin alpha-beta transport complex that passes though the nuclear pore complexes (NPC). Mediates docking of the substrate-importin complex to distinct nucleoporins. This is Transportin (tnpo) from Dictyostelium discoideum (Social amoeba).